We begin with the raw amino-acid sequence, 132 residues long: Putative F-box protein At4g05620 (132 aa).

The 47-residue stretch at 17–63 (QKKSLSLPHDVLVSCLAHVSRLHYSILSLVLKNFRSLIASPELYKTR) folds into the F-box domain.

The polypeptide is Putative F-box protein At4g05620 (Arabidopsis thaliana (Mouse-ear cress)).